The following is a 229-amino-acid chain: Somatolactin (229 aa).

The signal sequence occupies residues 1–24 (MHLVSVIQRGVWAVLLWPNLLASS). 3 disulfides stabilise this stretch: C29–C39, C87–C203, and C220–C228. 2 N-linked (GlcNAc...) asparagine glycosylation sites follow: N143 and N175.

It belongs to the somatotropin/prolactin family.

The protein resides in the secreted. The protein is Somatolactin of Cyclopterus lumpus (Lumpsucker).